The following is a 583-amino-acid chain: ATP-dependent lipid A-core flippase (583 aa).

7 consecutive transmembrane segments (helical) span residues 18 to 38 (LWPI…TLII), 65 to 85 (IFMW…MSGF), 105 to 127 (LLFN…ATLM), 143 to 163 (GALI…IMMF), 167 to 187 (WQLS…IKLV), 252 to 272 (VFEP…LYIA), and 277 to 297 (VIEM…IALM). The ABC transmembrane type-1 domain maps to 30 to 312 (IIASITLIIN…LTNVSAQFQR (283 aa)). One can recognise an ABC transporter domain in the interval 344 to 580 (IIFDNVTFFY…KGVYSQLYKF (237 aa)). 378–385 (GRSGSGKS) provides a ligand contact to ATP.

It belongs to the ABC transporter superfamily. Lipid exporter (TC 3.A.1.106) family. As to quaternary structure, homodimer.

The protein localises to the cell inner membrane. It catalyses the reaction ATP + H2O + lipid A-core oligosaccharideSide 1 = ADP + phosphate + lipid A-core oligosaccharideSide 2.. Involved in lipopolysaccharide (LPS) biosynthesis. Translocates lipid A-core from the inner to the outer leaflet of the inner membrane. Transmembrane domains (TMD) form a pore in the inner membrane and the ATP-binding domain (NBD) is responsible for energy generation. The polypeptide is ATP-dependent lipid A-core flippase (Blochmanniella floridana).